A 73-amino-acid polypeptide reads, in one-letter code: Beta-defensin 40 (73 aa).

The first 23 residues, 1–23 (MKISCFLLMIFFLSCFQINPVAV), serve as a signal peptide directing secretion. 3 cysteine pairs are disulfide-bonded: C29–C58, C36–C51, and C41–C59.

It belongs to the beta-defensin family. In terms of tissue distribution, only expressed in epididymis (corpus, cauda and caput).

The protein localises to the secreted. Functionally, has antibacterial activity. The polypeptide is Beta-defensin 40 (Defb40) (Mus musculus (Mouse)).